The chain runs to 230 residues: Large ribosomal subunit protein uL1 (230 aa).

The protein belongs to the universal ribosomal protein uL1 family. As to quaternary structure, part of the 50S ribosomal subunit.

Its function is as follows. Binds directly to 23S rRNA. The L1 stalk is quite mobile in the ribosome, and is involved in E site tRNA release. In terms of biological role, protein L1 is also a translational repressor protein, it controls the translation of the L11 operon by binding to its mRNA. This is Large ribosomal subunit protein uL1 from Acidiphilium cryptum (strain JF-5).